A 620-amino-acid chain; its full sequence is Two-component response regulator ORR27 (620 aa).

Positions 24 to 138 constitute a Response regulatory domain; the sequence is HVLVVDDDAA…AIKFIWKHVL (115 aa). Asp-76 is subject to 4-aspartylphosphate. 2 disordered regions span residues 171–197 and 215–257; these read PPAV…AELS and VWSS…LEAT. The segment at residues 261 to 321 is a DNA-binding region (myb-like GARP); that stretch reads KKVRTRFTWT…HLQKYRSWLE (61 aa). A compositionally biased stretch (polar residues) spans 431-456; that stretch reads SVSRDAHENGNSQARGSAMSNGTSGT. Disordered stretches follow at residues 431-457, 501-523, and 596-620; these read SVSR…SGTR, SDQN…NSKT, and PPRG…SSGP. The segment covering 603–620 has biased composition (polar residues); sequence EIASHENTNGKNGASSGP.

Belongs to the ARR family. Type-B subfamily. In terms of processing, two-component system major event consists of a His-to-Asp phosphorelay between a sensor histidine kinase (HK) and a response regulator (RR). In plants, the His-to-Asp phosphorelay involves an additional intermediate named Histidine-containing phosphotransfer protein (HPt). This multistep phosphorelay consists of a His-Asp-His-Asp sequential transfer of a phosphate group between first a His and an Asp of the HK protein, followed by the transfer to a conserved His of the HPt protein and finally the transfer to an Asp in the receiver domain of the RR protein.

The protein localises to the nucleus. Functionally, transcriptional activator that binds specific DNA sequence. Functions as a response regulator involved in His-to-Asp phosphorelay signal transduction system. Phosphorylation of the Asp residue in the receiver domain activates the ability of the protein to promote the transcription of target genes. May directly activate some type-A response regulators in response to cytokinins. The chain is Two-component response regulator ORR27 from Oryza sativa subsp. japonica (Rice).